The primary structure comprises 76 residues: Small ribosomal subunit protein bS18 (76 aa).

The protein belongs to the bacterial ribosomal protein bS18 family. Part of the 30S ribosomal subunit. Forms a tight heterodimer with protein bS6.

Its function is as follows. Binds as a heterodimer with protein bS6 to the central domain of the 16S rRNA, where it helps stabilize the platform of the 30S subunit. The polypeptide is Small ribosomal subunit protein bS18 (Stenotrophomonas maltophilia (strain R551-3)).